A 427-amino-acid chain; its full sequence is 3-phosphoshikimate 1-carboxyvinyltransferase (427 aa).

3-phosphoshikimate-binding residues include Lys-20, Ser-21, and Arg-25. Residue Lys-20 coordinates phosphoenolpyruvate. The phosphoenolpyruvate site is built by Gly-92 and Arg-120. Positions 166, 168, 312, and 339 each coordinate 3-phosphoshikimate. Gln-168 contributes to the phosphoenolpyruvate binding site. Asp-312 (proton acceptor) is an active-site residue. 2 residues coordinate phosphoenolpyruvate: Arg-343 and Arg-385.

The protein belongs to the EPSP synthase family. As to quaternary structure, monomer.

The protein localises to the cytoplasm. The catalysed reaction is 3-phosphoshikimate + phosphoenolpyruvate = 5-O-(1-carboxyvinyl)-3-phosphoshikimate + phosphate. It functions in the pathway metabolic intermediate biosynthesis; chorismate biosynthesis; chorismate from D-erythrose 4-phosphate and phosphoenolpyruvate: step 6/7. Its function is as follows. Catalyzes the transfer of the enolpyruvyl moiety of phosphoenolpyruvate (PEP) to the 5-hydroxyl of shikimate-3-phosphate (S3P) to produce enolpyruvyl shikimate-3-phosphate and inorganic phosphate. The chain is 3-phosphoshikimate 1-carboxyvinyltransferase from Streptococcus pneumoniae (strain 70585).